A 436-amino-acid chain; its full sequence is ATP-dependent protease ATPase subunit HslU (436 aa).

ATP-binding positions include isoleucine 18, 60–65 (GVGKTE), aspartate 249, glutamate 314, and arginine 386.

Belongs to the ClpX chaperone family. HslU subfamily. As to quaternary structure, a double ring-shaped homohexamer of HslV is capped on each side by a ring-shaped HslU homohexamer. The assembly of the HslU/HslV complex is dependent on binding of ATP.

The protein resides in the cytoplasm. Functionally, ATPase subunit of a proteasome-like degradation complex; this subunit has chaperone activity. The binding of ATP and its subsequent hydrolysis by HslU are essential for unfolding of protein substrates subsequently hydrolyzed by HslV. HslU recognizes the N-terminal part of its protein substrates and unfolds these before they are guided to HslV for hydrolysis. This chain is ATP-dependent protease ATPase subunit HslU, found in Chelativorans sp. (strain BNC1).